The sequence spans 298 residues: Tyrosine recombinase XerC (298 aa).

Residues 2–88 form the Core-binding (CB) domain; sequence TDLHTDVERY…ALRSFFDWLV (87 aa). Residues 109 to 288 form the Tyr recombinase domain; it reads HLPKNIDVDD…DFQHLASVYD (180 aa). Active-site residues include Arg-148, Lys-172, His-240, Arg-243, and His-266. The active-site O-(3'-phospho-DNA)-tyrosine intermediate is the Tyr-275.

The protein belongs to the 'phage' integrase family. XerC subfamily. In terms of assembly, forms a cyclic heterotetrameric complex composed of two molecules of XerC and two molecules of XerD, in which XerC interacts with XerD via its C-terminal region, XerD interacts with XerC via its C-terminal region and so on.

Its subcellular location is the cytoplasm. Its activity is regulated as follows. FtsK may regulate the catalytic switch between XerC and XerD in the heterotetrameric complex during the two steps of the recombination process. In terms of biological role, site-specific tyrosine recombinase, which acts by catalyzing the cutting and rejoining of the recombining DNA molecules. Binds cooperatively to specific DNA consensus sequences that are separated from XerD binding sites by a short central region, forming the heterotetrameric XerC-XerD complex that recombines DNA substrates. The complex is essential to convert dimers of the bacterial chromosome into monomers to permit their segregation at cell division. It also contributes to the segregational stability of plasmids. In the complex XerC specifically exchanges the top DNA strands. This chain is Tyrosine recombinase XerC, found in Escherichia coli (strain 55989 / EAEC).